Reading from the N-terminus, the 676-residue chain is Probable potassium transport system protein Kup (676 aa).

12 helical membrane-spanning segments follow: residues 14-34 (GLLI…LYVM), 56-76 (ISLI…IIAL), 97-117 (AAWL…DGTL), 142-162 (VSNQ…LFSI), 173-193 (AFGP…LINI), 219-239 (AGFA…ALYS), 252-272 (SWPF…VWIL), 296-316 (LASI…LITG), 345-365 (IYIP…VLFF), 376-396 (GLSI…WLVL), 402-422 (LANL…MGSS), and 429-449 (GGYV…VWYF).

It belongs to the HAK/KUP transporter (TC 2.A.72) family.

It is found in the cell membrane. It carries out the reaction K(+)(in) + H(+)(in) = K(+)(out) + H(+)(out). Transport of potassium into the cell. Likely operates as a K(+):H(+) symporter. This Lactobacillus delbrueckii subsp. bulgaricus (strain ATCC BAA-365 / Lb-18) protein is Probable potassium transport system protein Kup.